The following is a 352-amino-acid chain: PDZ and LIM domain protein 2 (352 aa).

Residues 1–84 enclose the PDZ domain; it reads MALTVDVAGP…PLRLQLDRSQ (84 aa). Disordered stretches follow at residues 67-97 and 111-149; these read SKIR…DSSL and YTES…TGEA. Residues 81-95 show a composition bias toward polar residues; the sequence is DRSQATSPGQTNGDS. Low complexity predominate over residues 111–135; it reads YTESQSSLRSSYSSPTSLSPRAGSP. Serine 124 is subject to Phosphoserine. Phosphothreonine is present on threonine 126. 10 positions are modified to phosphoserine: serine 127, serine 129, serine 134, serine 137, serine 143, serine 161, serine 197, serine 203, serine 213, and serine 266. The tract at residues 170–213 is disordered; sequence LSYSGRPGSRQAGLGRAGDSAVLVLPPSPGPRSSRPSMDSEGGS. Residues 284–344 form the LIM zinc-binding domain; that stretch reads HTCEKCSTSI…EKHARQRYSA (61 aa).

In terms of assembly, interacts with alpha-actinins ACTN1 and ACTN4, FLNA and MYH9. Interacts (via LIM zinc-binding domain) with MKRN2.

It localises to the cytoplasm. The protein localises to the nucleus. Its subcellular location is the cytoskeleton. Functionally, probable adapter protein located at the actin cytoskeleton that promotes cell attachment. Necessary for the migratory capacity of epithelial cells. Overexpression enhances cell adhesion to collagen and fibronectin and suppresses anchorage independent growth. May contribute to tumor cell migratory capacity. This Homo sapiens (Human) protein is PDZ and LIM domain protein 2 (PDLIM2).